An 80-amino-acid polypeptide reads, in one-letter code: Calmodulin (80 aa).

EF-hand domains are found at residues 12 to 47 (DSEE…LGEK) and 48 to 80 (LTDE…MTSK). Ca(2+) is bound by residues Asp25, Asp27, Asn29, Glu36, Asp61, Asp63, Asp65, Gln67, and Glu72.

This sequence belongs to the calmodulin family.

Functionally, calmodulin mediates the control of a large number of enzymes, ion channels and other proteins by Ca(2+). Among the enzymes to be stimulated by the calmodulin-Ca(2+) complex are a number of protein kinases and phosphatases. The polypeptide is Calmodulin (Strongylocentrotus purpuratus (Purple sea urchin)).